Here is a 246-residue protein sequence, read N- to C-terminus: Uridylate kinase (246 aa).

16-19 (KFSG) serves as a coordination point for ATP. Residue glycine 58 coordinates UMP. Positions 59 and 63 each coordinate ATP. Residues aspartate 78 and 139-146 (TGNPFFTT) each bind UMP. Threonine 166, tyrosine 172, and aspartate 175 together coordinate ATP.

It belongs to the UMP kinase family. In terms of assembly, homohexamer.

It is found in the cytoplasm. The enzyme catalyses UMP + ATP = UDP + ADP. It functions in the pathway pyrimidine metabolism; CTP biosynthesis via de novo pathway; UDP from UMP (UMPK route): step 1/1. Its activity is regulated as follows. Inhibited by UTP. Its function is as follows. Catalyzes the reversible phosphorylation of UMP to UDP. This is Uridylate kinase from Legionella pneumophila (strain Corby).